Consider the following 849-residue polypeptide: Protein translocase subunit SecA (849 aa).

Residues Q85, G103 to T107, and D493 each bind ATP. Positions 832, 834, 843, and 844 each coordinate Zn(2+).

Belongs to the SecA family. As to quaternary structure, monomer and homodimer. Part of the essential Sec protein translocation apparatus which comprises SecA, SecYEG and auxiliary proteins SecDF. Other proteins may also be involved. Zn(2+) is required as a cofactor.

The protein resides in the cell membrane. Its subcellular location is the cytoplasm. It carries out the reaction ATP + H2O + cellular proteinSide 1 = ADP + phosphate + cellular proteinSide 2.. Functionally, part of the Sec protein translocase complex. Interacts with the SecYEG preprotein conducting channel. Has a central role in coupling the hydrolysis of ATP to the transfer of proteins into and across the cell membrane, serving as an ATP-driven molecular motor driving the stepwise translocation of polypeptide chains across the membrane. The sequence is that of Protein translocase subunit SecA from Streptococcus thermophilus (strain ATCC BAA-491 / LMD-9).